Reading from the N-terminus, the 483-residue chain is 1-aminocyclopropane-1-carboxylate synthase 2 (483 aa).

N6-(pyridoxal phosphate)lysine is present on lysine 275.

This sequence belongs to the class-I pyridoxal-phosphate-dependent aminotransferase family. Pyridoxal 5'-phosphate serves as cofactor.

It carries out the reaction S-adenosyl-L-methionine = 1-aminocyclopropane-1-carboxylate + S-methyl-5'-thioadenosine + H(+). It functions in the pathway alkene biosynthesis; ethylene biosynthesis via S-adenosyl-L-methionine; ethylene from S-adenosyl-L-methionine: step 1/2. In terms of biological role, catalyzes the formation of 1-aminocyclopropane-1-carboxylate, a direct precursor of ethylene in higher plants. Involved in defense response by producing ethylene after pathogen infection. Involved in several phosphate deficiency-induced adaptive responses, such as lateral root elongation. The protein is 1-aminocyclopropane-1-carboxylate synthase 2 of Oryza sativa subsp. japonica (Rice).